A 403-amino-acid polypeptide reads, in one-letter code: Probable tRNA sulfurtransferase (403 aa).

The THUMP domain occupies 60–165 (KLAEERLKPI…KEGVFLSCRT (106 aa)). Residues 183-184 (ML), 208-209 (HF), Arg-265, Gly-287, and Gln-296 contribute to the ATP site.

Belongs to the ThiI family.

The protein localises to the cytoplasm. The enzyme catalyses [ThiI sulfur-carrier protein]-S-sulfanyl-L-cysteine + a uridine in tRNA + 2 reduced [2Fe-2S]-[ferredoxin] + ATP + H(+) = [ThiI sulfur-carrier protein]-L-cysteine + a 4-thiouridine in tRNA + 2 oxidized [2Fe-2S]-[ferredoxin] + AMP + diphosphate. The catalysed reaction is [ThiS sulfur-carrier protein]-C-terminal Gly-Gly-AMP + S-sulfanyl-L-cysteinyl-[cysteine desulfurase] + AH2 = [ThiS sulfur-carrier protein]-C-terminal-Gly-aminoethanethioate + L-cysteinyl-[cysteine desulfurase] + A + AMP + 2 H(+). It functions in the pathway cofactor biosynthesis; thiamine diphosphate biosynthesis. Catalyzes the ATP-dependent transfer of a sulfur to tRNA to produce 4-thiouridine in position 8 of tRNAs, which functions as a near-UV photosensor. Also catalyzes the transfer of sulfur to the sulfur carrier protein ThiS, forming ThiS-thiocarboxylate. This is a step in the synthesis of thiazole, in the thiamine biosynthesis pathway. The sulfur is donated as persulfide by IscS. This chain is Probable tRNA sulfurtransferase, found in Listeria welshimeri serovar 6b (strain ATCC 35897 / DSM 20650 / CCUG 15529 / CIP 8149 / NCTC 11857 / SLCC 5334 / V8).